A 266-amino-acid chain; its full sequence is Tryptophan synthase alpha chain (266 aa).

Active-site proton acceptor residues include Glu49 and Asp60.

The protein belongs to the TrpA family. In terms of assembly, tetramer of two alpha and two beta chains.

The catalysed reaction is (1S,2R)-1-C-(indol-3-yl)glycerol 3-phosphate + L-serine = D-glyceraldehyde 3-phosphate + L-tryptophan + H2O. It participates in amino-acid biosynthesis; L-tryptophan biosynthesis; L-tryptophan from chorismate: step 5/5. In terms of biological role, the alpha subunit is responsible for the aldol cleavage of indoleglycerol phosphate to indole and glyceraldehyde 3-phosphate. The chain is Tryptophan synthase alpha chain from Thioalkalivibrio sulfidiphilus (strain HL-EbGR7).